Reading from the N-terminus, the 445-residue chain is Chromosome partition protein MukF (445 aa).

The leucine-zipper stretch occupies residues 213-241; it reads LSETSNTLKELQDTLQAAGDELQTQILDI.

The protein belongs to the MukF family. In terms of assembly, interacts, and probably forms a ternary complex, with MukE and MukB via its C-terminal region. The complex formation is stimulated by calcium or magnesium. It is required for an interaction between MukE and MukB.

It localises to the cytoplasm. It is found in the nucleoid. Its function is as follows. Involved in chromosome condensation, segregation and cell cycle progression. May participate in facilitating chromosome segregation by condensation DNA from both sides of a centrally located replisome during cell division. Not required for mini-F plasmid partitioning. Probably acts via its interaction with MukB and MukE. Overexpression results in anucleate cells. It has a calcium binding activity. The chain is Chromosome partition protein MukF from Vibrio vulnificus (strain CMCP6).